Consider the following 1015-residue polypeptide: Cytosolic carboxypeptidase 1 (1015 aa).

Residues 384-462 (LPTATPSTPG…GALPKTTRLN (79 aa)) are disordered. The span at 416–451 (EDGMDEEDEAFVRDDDDEGKDDRGSDDDDGKDDDEI) shows a compositional bias: acidic residues. Residues 727-1013 (YPYTYSFLNS…DLLHSFLEMT (287 aa)) enclose the Peptidase M14 domain. His792, Glu795, and His891 together coordinate Zn(2+). Glu977 acts as the Proton donor/acceptor in catalysis.

Belongs to the peptidase M14 family. The cofactor is Zn(2+). In hermaphrodites and males, expressed in amphid and IL2 ciliated sensory neurons. In males, expressed in CEM head neurons, RnB and HOB tail neurons, and in gubernacular erector and retractor muscles.

It is found in the perikaryon. The protein resides in the cell projection. The protein localises to the cilium. It localises to the dendrite. Its function is as follows. Catalyzes the deglutamylation of polyglutamate side chains generated by post-translational polyglutamylation of proteins such as tubulins. Via the deglutamylation of tubulin, regulates the localization and velocity of kinesin motors and the structural integrity of microtubules in sensory cilia. In male CEM sensory neurons, regulates the cilia release of bioactive extracellular vesicles. Also regulates microtubule dynamics in uterine muscle cells. The chain is Cytosolic carboxypeptidase 1 from Caenorhabditis elegans.